A 198-amino-acid polypeptide reads, in one-letter code: Translation machinery-associated protein 22 (198 aa).

Residues 100 to 171 (IIIKRSERTK…EIVEMIRQQV (72 aa)) form the SUI1 domain.

This sequence belongs to the DENR family. Interacts with the 40S ribosomal subunit.

It localises to the cytoplasm. The chain is Translation machinery-associated protein 22 (TMA22) from Cryptococcus neoformans var. neoformans serotype D (strain B-3501A) (Filobasidiella neoformans).